The sequence spans 73 residues: MAKEELVEFGGKVSEVLPDNRFRVILENGFEVWAYSSGRLKKNRIRVLAGDRVTLEMSPYDLTKGRINYRHKS.

An S1-like domain is found at 1-72; that stretch reads MAKEELVEFG…TKGRINYRHK (72 aa).

This sequence belongs to the IF-1 family. Component of the 30S ribosomal translation pre-initiation complex which assembles on the 30S ribosome in the order IF-2 and IF-3, IF-1 and N-formylmethionyl-tRNA(fMet); mRNA recruitment can occur at any time during PIC assembly.

It localises to the cytoplasm. In terms of biological role, one of the essential components for the initiation of protein synthesis. Stabilizes the binding of IF-2 and IF-3 on the 30S subunit to which N-formylmethionyl-tRNA(fMet) subsequently binds. Helps modulate mRNA selection, yielding the 30S pre-initiation complex (PIC). Upon addition of the 50S ribosomal subunit IF-1, IF-2 and IF-3 are released leaving the mature 70S translation initiation complex. The polypeptide is Translation initiation factor IF-1 3 (Cupriavidus metallidurans (strain ATCC 43123 / DSM 2839 / NBRC 102507 / CH34) (Ralstonia metallidurans)).